A 217-amino-acid chain; its full sequence is Ribonuclease T (217 aa).

The 175-residue stretch at 20-194 folds into the Exonuclease domain; sequence VVIDIETAGF…YDTQQTANLF (175 aa). Residues Asp-23, Glu-25, His-181, and Asp-186 each contribute to the Mg(2+) site. The active-site Proton donor/acceptor is His-181.

It belongs to the RNase T family. As to quaternary structure, homodimer. Mg(2+) serves as cofactor.

In terms of biological role, trims short 3' overhangs of a variety of RNA species, leaving a one or two nucleotide 3' overhang. Responsible for the end-turnover of tRNA: specifically removes the terminal AMP residue from uncharged tRNA (tRNA-C-C-A). Also appears to be involved in tRNA biosynthesis. This chain is Ribonuclease T, found in Buchnera aphidicola subsp. Baizongia pistaciae (strain Bp).